The chain runs to 224 residues: Ribose-5-phosphate isomerase A (224 aa).

Substrate contacts are provided by residues 33 to 36 (TGST), 86 to 89 (DGAD), and 99 to 102 (KGGG). Catalysis depends on glutamate 108, which acts as the Proton acceptor. Lysine 126 serves as a coordination point for substrate.

Belongs to the ribose 5-phosphate isomerase family. Homodimer.

It catalyses the reaction aldehydo-D-ribose 5-phosphate = D-ribulose 5-phosphate. It participates in carbohydrate degradation; pentose phosphate pathway; D-ribose 5-phosphate from D-ribulose 5-phosphate (non-oxidative stage): step 1/1. Its function is as follows. Catalyzes the reversible conversion of ribose-5-phosphate to ribulose 5-phosphate. This is Ribose-5-phosphate isomerase A from Bordetella avium (strain 197N).